Reading from the N-terminus, the 506-residue chain is MPQLGLLPGRAWTVLLGLLRPPPGALCIRAVRSHSQVAEALFASQLKPHQEKSNFTIKTPKGTRDLSPQQMVVREKILDVVVSCFKRHGAKGLDTPAFELKEILTEKYGEDSGLIYDLKDQGGELLSLRYDLTVPFARYLAMNKVKKMKRYHVGKVWRRESPTIVQGRYREFYQCDFDIAGQFDPMIPDAECLKIMCEILSGLHLGDFLIKVSDRRILDGIFAVCGVPESKFHAICSSVDKLDKISWKDVRHEMVVKKGLAPEVADRIGDYVQCHGGISLVEQMFQDPRLSQNKQALEGLGDLKLLFEYLTLFGVAEKVSFDLSLARGLDYYTGVIYEAVLLQTPVHAEEEPLNMGSVAAGGRYDGLVGMFDPRGHKVPCVGLSIGVERIFSIVEQRIKTFGEKIRTTETQVFVATPQKNFLQERLKLIAELWDAGIKAELMYKNNPKLLPQLHYCENMGIPLVVIIGEQELKEGVIKLRSVASREEVAIKRENLVAEIQKRLSES.

The N-terminal 33 residues, 1 to 33 (MPQLGLLPGRAWTVLLGLLRPPPGALCIRAVRS), are a transit peptide targeting the mitochondrion. Position 67 is a phosphoserine (serine 67). L-histidine contacts are provided by residues 131–133 (DLT), arginine 158, glutamine 174, aspartate 178, arginine 327, and 331–332 (YY). N6-acetyllysine is present on lysine 444.

The protein belongs to the class-II aminoacyl-tRNA synthetase family. In terms of assembly, homodimer.

Its subcellular location is the mitochondrion. It carries out the reaction tRNA(His) + L-histidine + ATP = L-histidyl-tRNA(His) + AMP + diphosphate + H(+). In terms of biological role, mitochondrial aminoacyl-tRNA synthetase that catalyzes the ATP-dependent ligation of histidine to the 3'-end of its cognate tRNA, via the formation of an aminoacyl-adenylate intermediate (His-AMP). This Bos taurus (Bovine) protein is Histidine--tRNA ligase, mitochondrial (HARS2).